Consider the following 504-residue polypeptide: Zinc finger CCCH-type with G patch domain-containing protein (504 aa).

Positions 95–121 (LSEDSNEVKPNPDTDEENEEEEQDISG) are disordered. A compositionally biased stretch (acidic residues) spans 107–118 (DTDEENEEEEQD). The C3H1-type zinc finger occupies 165–191 (KSMKPCGFYLEGKCRFMDNCRYSHGEV). Residues 308–354 (TRGIGSKLLMKMGYELGKGLGKTLSGRVEPVQAVVLPKGHSLDICAE) enclose the G-patch domain.

Its subcellular location is the nucleus. Transcription repressor that specifically binds the 5'-GGAG[GA]A[GA]A-3' consensus sequence. Represses transcription by recruiting the chromatin multiprotein complex NuRD to target promoters. Negatively regulates expression of EGFR, a gene involved in cell proliferation, survival and migration. The polypeptide is Zinc finger CCCH-type with G patch domain-containing protein (zgpat) (Danio rerio (Zebrafish)).